The chain runs to 788 residues: Cell division cycle protein 27 homolog (788 aa).

Positions 198-436 (YLDSPASSLK…PLPSVASSLN (239 aa)) are disordered. Over residues 217 to 229 (GPSSSSAASTAEP) the composition is skewed to low complexity. Polar residues-rich tracts occupy residues 241-273 (RGTI…SRIN), 293-303 (SSVTGSRSSLF), and 319-360 (NRAN…NPVR). A compositionally biased stretch (low complexity) spans 366-378 (ADAAAAANKTAKT). The span at 391 to 414 (VSRNSNLARSLSGSTNSVASTASE) shows a compositional bias: polar residues. TPR repeat units follow at residues 561–594 (PQSW…DKRF), 596–628 (YAYT…SPRD), 629–662 (YRAW…NPTN), 664–696 (AMLC…NPLD), and 731–764 (AFIF…DPRG).

This sequence belongs to the APC3/CDC27 family. The APC/C complex is probably composed of at least 12 subunits: apc-2, apc-10, apc-11, cdc-26, emb-1, emb-27, emb-30, mat-1, mat-2, mat-3, such-1 and gfi-3. As to expression, expressed in the ventral nerve cord.

The protein resides in the nucleus. It participates in protein modification; protein ubiquitination. Functionally, probable component of the anaphase promoting complex/cyclosome (APC/C), a cell cycle-regulated E3 ubiquitin ligase that controls progression through mitosis and the G1 phase of the cell cycle. The APC/C complex acts by mediating ubiquitination and subsequent degradation of target proteins. Developmental role in early embryogenesis and the metaphase to anaphase transition in oocyte and spermatocyte meiosis and mitosis in germ cells. Required for embryonic anterior-posterior axis formation. Plays a role in regulating the abundance of glr-1 receptors in postmitotic neurons, which may in turn control animal locomotion. The polypeptide is Cell division cycle protein 27 homolog (Caenorhabditis elegans).